Reading from the N-terminus, the 159-residue chain is NADH-quinone oxidoreductase subunit I (159 aa).

2 4Fe-4S ferredoxin-type domains span residues 51-80 (RRYE…IEAD) and 90-119 (TRYD…EGPN). [4Fe-4S] cluster is bound by residues Cys60, Cys63, Cys66, Cys70, Cys99, Cys102, Cys105, and Cys109.

It belongs to the complex I 23 kDa subunit family. As to quaternary structure, NDH-1 is composed of 14 different subunits. Subunits NuoA, H, J, K, L, M, N constitute the membrane sector of the complex. [4Fe-4S] cluster serves as cofactor.

The protein localises to the cell inner membrane. The enzyme catalyses a quinone + NADH + 5 H(+)(in) = a quinol + NAD(+) + 4 H(+)(out). Its function is as follows. NDH-1 shuttles electrons from NADH, via FMN and iron-sulfur (Fe-S) centers, to quinones in the respiratory chain. The immediate electron acceptor for the enzyme in this species is believed to be ubiquinone. Couples the redox reaction to proton translocation (for every two electrons transferred, four hydrogen ions are translocated across the cytoplasmic membrane), and thus conserves the redox energy in a proton gradient. The sequence is that of NADH-quinone oxidoreductase subunit I from Rickettsia akari (strain Hartford).